Consider the following 259-residue polypeptide: DNA repair protein RecO (259 aa).

It belongs to the RecO family.

Functionally, involved in DNA repair and RecF pathway recombination. In Leuconostoc mesenteroides subsp. mesenteroides (strain ATCC 8293 / DSM 20343 / BCRC 11652 / CCM 1803 / JCM 6124 / NCDO 523 / NBRC 100496 / NCIMB 8023 / NCTC 12954 / NRRL B-1118 / 37Y), this protein is DNA repair protein RecO.